Here is a 130-residue protein sequence, read N- to C-terminus: UPF0102 protein AHA_3896 (130 aa).

It belongs to the UPF0102 family.

This is UPF0102 protein AHA_3896 from Aeromonas hydrophila subsp. hydrophila (strain ATCC 7966 / DSM 30187 / BCRC 13018 / CCUG 14551 / JCM 1027 / KCTC 2358 / NCIMB 9240 / NCTC 8049).